The chain runs to 430 residues: Putative O-antigen transporter (430 aa).

A run of 12 helical transmembrane segments spans residues 23 to 39 (IIIA…LISM), 45 to 61 (YAIF…CSAV), 96 to 112 (IAII…SGVI), 131 to 147 (LFFT…IGAI), 163 to 179 (LLNA…LLYI), 192 to 208 (LIVL…CYIV), 236 to 252 (LFTL…YMVI), 266 to 282 (VTMK…TAIL), 309 to 325 (ILLG…FIYL), 342 to 358 (VSIL…CIRV), 373 to 389 (LKIL…IGGI), and 400 to 416 (ISGV…LTVF).

The protein localises to the cell inner membrane. The protein operates within bacterial outer membrane biogenesis; LPS O-antigen biosynthesis. In terms of biological role, may be involved in the translocation process of the nascent O-polysaccharide molecules and/or its ligation to lipid A core units. In Salmonella typhimurium (strain LT2 / SGSC1412 / ATCC 700720), this protein is Putative O-antigen transporter (rfbX).